The following is a 447-amino-acid chain: Signal recognition particle 54 kDa protein (447 aa).

Residues 103–110 (GVQGSGKT), 185–189 (DTAGR), and 245–248 (TKMD) contribute to the GTP site.

Belongs to the GTP-binding SRP family. SRP54 subfamily. As to quaternary structure, part of the signal recognition particle protein translocation system, which is composed of SRP and FtsY. Archaeal SRP consists of a 7S RNA molecule of 300 nucleotides and two protein subunits: SRP54 and SRP19.

The protein localises to the cytoplasm. The catalysed reaction is GTP + H2O = GDP + phosphate + H(+). In terms of biological role, involved in targeting and insertion of nascent membrane proteins into the cytoplasmic membrane. Binds to the hydrophobic signal sequence of the ribosome-nascent chain (RNC) as it emerges from the ribosomes. The SRP-RNC complex is then targeted to the cytoplasmic membrane where it interacts with the SRP receptor FtsY. In Saccharolobus islandicus (strain L.S.2.15 / Lassen #1) (Sulfolobus islandicus), this protein is Signal recognition particle 54 kDa protein.